We begin with the raw amino-acid sequence, 653 residues long: ATP-dependent rRNA helicase SPB4 (653 aa).

The Q motif motif lies at 17–45 (WQALTPPLSEWILDAVAAMGFTRMTPVQA). The 210-residue stretch at 48 to 257 (IPLFMGHKDV…RVGLRNPVKI (210 aa)) folds into the Helicase ATP-binding domain. 61–68 (AVTGSGKT) is an ATP binding site. Residues 205–208 (DEAD) carry the DEAD box motif. The region spanning 291 to 444 (AIRQILNSID…SPPVALSDTL (154 aa)) is the Helicase C-terminal domain. Residues 534–653 (KQREKHRQES…DGESEFEGFD (120 aa)) are disordered. Over residues 558–569 (PSSSSNNDTAPW) the composition is skewed to polar residues. Residues 571 to 627 (KTLEKKSDKEKRRERKRAKKEREHWEKMTEEEKTKSRETHQMLEELRKKNRQELNAK) adopt a coiled-coil conformation. 2 stretches are compositionally biased toward basic and acidic residues: residues 572–581 (TLEKKSDKEK) and 590–626 (KERE…ELNA). A compositionally biased stretch (polar residues) spans 627–636 (KSHTSSSVLS). Residues 641–653 (AELDGESEFEGFD) show a composition bias toward acidic residues.

This sequence belongs to the DEAD box helicase family. DDX55/SPB4 subfamily. In terms of assembly, component of pre-60S ribosomal complexes.

Its subcellular location is the nucleus. It is found in the nucleolus. The enzyme catalyses ATP + H2O = ADP + phosphate + H(+). Its function is as follows. ATP-binding RNA helicase involved in the biogenesis of 60S ribosomal subunits. Binds 90S pre-ribosomal particles and dissociates from pre-60S ribosomal particles after processing of 27SB pre-rRNA. Required for the normal formation of 18S rRNA through the processing of pre-rRNAs at sites A0, A1 and A2, and the normal formation of 25S and 5.8S rRNAs through the processing of pre-rRNAs at sites C1 and C2. This is ATP-dependent rRNA helicase SPB4 from Coccidioides immitis (strain RS) (Valley fever fungus).